A 301-amino-acid chain; its full sequence is Bifunctional protein FolD (301 aa).

NADP(+)-binding positions include glycine 169 to serine 171, serine 194, and isoleucine 235.

The protein belongs to the tetrahydrofolate dehydrogenase/cyclohydrolase family. As to quaternary structure, homodimer.

The enzyme catalyses (6R)-5,10-methylene-5,6,7,8-tetrahydrofolate + NADP(+) = (6R)-5,10-methenyltetrahydrofolate + NADPH. It carries out the reaction (6R)-5,10-methenyltetrahydrofolate + H2O = (6R)-10-formyltetrahydrofolate + H(+). Its pathway is one-carbon metabolism; tetrahydrofolate interconversion. In terms of biological role, catalyzes the oxidation of 5,10-methylenetetrahydrofolate to 5,10-methenyltetrahydrofolate and then the hydrolysis of 5,10-methenyltetrahydrofolate to 10-formyltetrahydrofolate. The sequence is that of Bifunctional protein FolD from Gloeothece citriformis (strain PCC 7424) (Cyanothece sp. (strain PCC 7424)).